The following is a 2465-amino-acid chain: Highly reducing polyketide synthase milA (2465 aa).

The 434-residue stretch at 1–434 (MEPIAIVGSA…GANCHVILEG (434 aa)) folds into the Ketosynthase family 3 (KS3) domain. Active-site for beta-ketoacyl synthase activity residues include Cys172, His311, and His355. Residues 450 to 476 (KPSLSSSPSLSPTSTSPPTPRTPANSL) are disordered. A compositionally biased stretch (low complexity) spans 451–463 (PSLSSSPSLSPTS). A malonyl-CoA:ACP transacylase (MAT) domain region spans residues 567–888 (VFTGQGAQWA…CGTLSRAVDD (322 aa)). The N-terminal hotdog fold stretch occupies residues 957–1096 (HPLLGVRTNT…GKVQLFVGGD (140 aa)). Residues 957–1265 (HPLLGVRTNT…LTVSPVAPVT (309 aa)) are dehydratase (DH) domain. Residues 957–1267 (HPLLGVRTNT…VSPVAPVTAD (311 aa)) enclose the PKS/mFAS DH domain. His989 acts as the Proton acceptor; for dehydratase activity in catalysis. The segment at 1111-1267 (LNEIDVDTFY…VSPVAPVTAD (157 aa)) is C-terminal hotdog fold. Asp1174 (proton donor; for dehydratase activity) is an active-site residue. Residues 1334–1367 (HSTNGLTNGHASTNGHGSTNGHISTNGHSTNGDV) form a disordered region. Residues 2095–2269 (TYFLVGMAGS…AASVINLTGV (175 aa)) are ketoreductase (KR)domain. The Carrier domain maps to 2384 to 2459 (DMIFRAFQTV…QVVWSVVHQI (76 aa)). At Ser2419 the chain carries O-(pantetheine 4'-phosphoryl)serine.

Pantetheine 4'-phosphate serves as cofactor.

It carries out the reaction 10 malonyl-CoA + acetyl-CoA + 3 AH2 + 8 NADPH + 18 H(+) = cordypyrone A + 3 A + 10 CO2 + 8 NADP(+) + 11 CoA + 8 H2O. It participates in secondary metabolite biosynthesis. Highly reducing polyketide synthase (HR-PKS); part of the gene cluster that mediates the biosynthesis of cordypyrones A and B, 2 pyrones that show modest activities against pathogenic bacteria including methicillin-resistant Staphylococcus aureus (MRSA), Mycobacterium tuberculosis and Bacillus cereus. The HR-PKS milA catalyzes the formation of cordypyrones A via condensation of one acetate with 10 malonate units. Since milA lacks an enoyl reductase domain, the 2 beta-keto processing domains DH and KR of milA collaborate with the trans-enoyl reductase milB to catalyze the different levels of reduction. The cytochrome P450 monooxygenase milC then hydroxylates the C-22 of cordypyrones A to yield cordypyrones B. This is Highly reducing polyketide synthase milA from Cordyceps militaris (strain CM01) (Caterpillar fungus).